A 313-amino-acid polypeptide reads, in one-letter code: Ribosomal RNA small subunit methyltransferase H (313 aa).

S-adenosyl-L-methionine-binding positions include 35–37, Asp55, Phe79, Asp101, and Gln108; that span reads GGH.

Belongs to the methyltransferase superfamily. RsmH family.

The protein localises to the cytoplasm. It carries out the reaction cytidine(1402) in 16S rRNA + S-adenosyl-L-methionine = N(4)-methylcytidine(1402) in 16S rRNA + S-adenosyl-L-homocysteine + H(+). In terms of biological role, specifically methylates the N4 position of cytidine in position 1402 (C1402) of 16S rRNA. The protein is Ribosomal RNA small subunit methyltransferase H of Escherichia coli O81 (strain ED1a).